A 308-amino-acid polypeptide reads, in one-letter code: Probable peptidyl-prolyl cis-trans isomerase B (308 aa).

The disordered stretch occupies residues 74-123; it reads DHQSTTSATPTDSASTSPPQAATAPPLPPFKPSANLGANCQYPPSPDKAV. Residues 77–97 show a composition bias toward low complexity; sequence STTSATPTDSASTSPPQAATA. Residues 139 to 307 enclose the PPIase cyclophilin-type domain; it reads AQVSVSMVTN…TEVTITSVLL (169 aa).

It belongs to the cyclophilin-type PPIase family.

It catalyses the reaction [protein]-peptidylproline (omega=180) = [protein]-peptidylproline (omega=0). PPIases accelerate the folding of proteins. It catalyzes the cis-trans isomerization of proline imidic peptide bonds in oligopeptides. This is Probable peptidyl-prolyl cis-trans isomerase B (ppiB) from Mycobacterium tuberculosis (strain CDC 1551 / Oshkosh).